A 389-amino-acid polypeptide reads, in one-letter code: S-adenosylmethionine synthase (389 aa).

ATP is bound at residue histidine 17. Residue aspartate 19 participates in Mg(2+) binding. A K(+)-binding site is contributed by glutamate 45. Residues glutamate 58 and glutamine 101 each contribute to the L-methionine site. The segment at 101-111 (QSPDIAQGVTE) is flexible loop. Residues 168–170 (DSK), 234–235 (RF), aspartate 243, 249–250 (RK), alanine 266, and lysine 270 each bind ATP. Residue aspartate 243 coordinates L-methionine. Residue lysine 274 participates in L-methionine binding.

The protein belongs to the AdoMet synthase family. As to quaternary structure, homotetramer; dimer of dimers. Requires Mg(2+) as cofactor. It depends on K(+) as a cofactor.

The protein localises to the cytoplasm. The enzyme catalyses L-methionine + ATP + H2O = S-adenosyl-L-methionine + phosphate + diphosphate. It functions in the pathway amino-acid biosynthesis; S-adenosyl-L-methionine biosynthesis; S-adenosyl-L-methionine from L-methionine: step 1/1. In terms of biological role, catalyzes the formation of S-adenosylmethionine (AdoMet) from methionine and ATP. The overall synthetic reaction is composed of two sequential steps, AdoMet formation and the subsequent tripolyphosphate hydrolysis which occurs prior to release of AdoMet from the enzyme. This is S-adenosylmethionine synthase from Geotalea uraniireducens (strain Rf4) (Geobacter uraniireducens).